Here is a 256-residue protein sequence, read N- to C-terminus: Ribosomal RNA small subunit methyltransferase J (256 aa).

S-adenosyl-L-methionine is bound by residues Arg-104 to Asp-105, Glu-120 to Arg-121, Ser-156 to Ser-157, and Asp-174.

Belongs to the methyltransferase superfamily. RsmJ family.

The protein resides in the cytoplasm. It carries out the reaction guanosine(1516) in 16S rRNA + S-adenosyl-L-methionine = N(2)-methylguanosine(1516) in 16S rRNA + S-adenosyl-L-homocysteine + H(+). In terms of biological role, specifically methylates the guanosine in position 1516 of 16S rRNA. In Yersinia pseudotuberculosis serotype O:3 (strain YPIII), this protein is Ribosomal RNA small subunit methyltransferase J.